Consider the following 99-residue polypeptide: Malonate decarboxylase acyl carrier protein (99 aa).

Position 25 is an O-(phosphoribosyl dephospho-coenzyme A)serine (S25).

The protein belongs to the MdcC family. Post-translationally, covalently binds the prosthetic group of malonate decarboxylase.

It is found in the cytoplasm. Its function is as follows. Subunit of malonate decarboxylase, it is an acyl carrier protein to which acetyl and malonyl thioester residues are bound via a 2'-(5''-phosphoribosyl)-3'-dephospho-CoA prosthetic group and turn over during the catalytic mechanism. The protein is Malonate decarboxylase acyl carrier protein of Pseudomonas fluorescens (strain Pf0-1).